Reading from the N-terminus, the 126-residue chain is CD59 glycoprotein (126 aa).

Residues 1-25 form the signal peptide; sequence MGIQGGSVLFGLLLALAVFCHSGHS. One can recognise a UPAR/Ly6 domain in the interval 26-106; the sequence is LQCYNCPNPT…QLENGGTSLS (81 aa). Cystine bridges form between C28-C51, C31-C38, C44-C64, C70-C88, and C89-C94. A glycan (N-linked (GlcNAc...) asparagine) is linked at N43. N100 is lipidated: GPI-anchor amidated asparagine. The propeptide at 101–126 is removed in mature form; sequence GGTSLSEKTVLLLVTPLLAAAWCLHP.

In terms of assembly, interacts with T-cell surface antigen CD2. Post-translationally, N- and O-glycosylated.

It is found in the cell membrane. The protein resides in the secreted. Its function is as follows. Potent inhibitor of the complement membrane attack complex (MAC) action, which protects self-cells from damage during complement activation. Acts by binding to the beta-haipins of C8 (C8A and C8B) components of the assembling MAC, forming an intermolecular beta-sheet that prevents incorporation of the multiple copies of C9 required for complete formation of the osmolytic pore. This chain is CD59 glycoprotein, found in Papio sp. (Baboon).